The following is a 499-amino-acid chain: Endosomal/lysosomal proton channel TMEM175 (499 aa).

Residues 1–10 show a composition bias toward polar residues; sequence MSRLQVQEQA. The disordered stretch occupies residues 1–26; it reads MSRLQVQEQAVDSEGDSSLYRRDEEG. At 1–30 the chain is on the cytoplasmic side; the sequence is MSRLQVQEQAVDSEGDSSLYRRDEEGTQSS. The helical transmembrane segment at 31 to 53 threads the bilayer; sequence HRMLGFSDALLSIIATVMILPVT. A RxxxFSD motif 1 motif is present at residues 32–38; that stretch reads RMLGFSD. Residues 54-74 lie on the Lumenal side of the membrane; it reads HTEISPEQQFDKSIQKLLATR. The interval 55–60 is short helix H1-1; that stretch reads TEISPE. The tract at residues 62-68 is short helix H2-1; sequence QFDKSIQ. The helical transmembrane segment at 75 to 97 threads the bilayer; it reads IAVYLMTFLIVTVAWAAHTRLFQ. The Cytoplasmic segment spans residues 98 to 103; the sequence is VVGKID. A helical membrane pass occupies residues 104 to 125; sequence DTLALLNLACMMTITLLPYTFS. The Lumenal portion of the chain corresponds to 126-135; it reads LMVTFPDVPL. Residues 136 to 157 form a helical membrane-spanning segment; it reads GIFLFCMCVIAIGSVQAMIVGY. Residues 158 to 181 are Cytoplasmic-facing; that stretch reads AFHFPHLLNPQIQCSTHRALSRRH. The chain crosses the membrane as a helical span at residues 182 to 202; that stretch reads ILHLVLRGPALCFVAAVFSLF. Topologically, residues 203–207 are lumenal; sequence FFPLS. A helical transmembrane segment spans residues 208–227; sequence YLLMVTVIFLPHISKATTWC. Residues 228–254 are Cytoplasmic-facing; sequence KDKFMGHRESPAHNVEPFSIDLHAPLS. The helical transmembrane segment at 255-279 threads the bilayer; the sequence is KERVEAFSDGVYAIVATLLILDICE. The RxxxFSD motif 2 signature appears at 257–263; the sequence is RVEAFSD. Residues 280-306 lie on the Lumenal side of the membrane; that stretch reads DNVPDPKDVQQKFSGSLVAALGAYGPQ. Positions 285–293 are short helix H1-2; sequence PKDVQQKFS. Residues 295–301 are short helix H2-2; it reads SLVAALG. The chain crosses the membrane as a helical span at residues 307-329; the sequence is FLAYFGSFATVGLLWFAHHSLFL. The Cytoplasmic segment spans residues 330 to 335; sequence HVRKAT. Residues 336 to 357 traverse the membrane as a helical segment; the sequence is QTMGLFNILSLAFVGGLPLAYQ. Over 358-372 the chain is Lumenal; that stretch reads QTSAFARQPRDELER. The helical transmembrane segment at 373 to 393 threads the bilayer; it reads VRVSCAIIFFASIFQFAIWTT. Over 394–413 the chain is Cytoplasmic; sequence ALLHQRETLQPAVQFGGQEH. The chain crosses the membrane as a helical span at residues 414–437; sequence AFMFAKLALYPCASLLAFAATCLL. The Lumenal segment spans residues 438–439; that stretch reads SR. The chain crosses the membrane as a helical span at residues 440–466; that stretch reads FSTAIFHLMQIAVPFAFLLLRLLVRLA. Residues 467-499 are Cytoplasmic-facing; that stretch reads LAGLQVLWDLWPERPQQDQGEPETQSQLLPASC.

The protein belongs to the TMEM175 family. In terms of assembly, homodimer. Interacts with AKT (AKT1, AKT2 or AKT3); leading to formation of the lysoK(GF) complex, which activates the channel. Interacts with LAMP1; inhibiting the proton channel activity of TMEM175. Interacts with LAMP2; inhibiting the proton channel activity of TMEM175.

Its subcellular location is the endosome membrane. It localises to the lysosome membrane. It catalyses the reaction H(+)(in) = H(+)(out). The enzyme catalyses K(+)(in) = K(+)(out). With respect to regulation, active at low pH (under pH 4.6): proton channel activity is activated by luminal side protons. Polyunsaturated fatty acids, such as arachidonic acid, also activate the channel activity. Proton channel activity is directly inhibited by LAMP1 or LAMP2, facilitating lysosomal acidification. Channel activity is activated following interaction with AKT (AKT1, AKT2 or AKT3): interaction promotes activation from closed to an open state. Activation by AKT is independent of AKT serine/threonine-protein kinase activity. Proton-activated proton channel that catalyzes proton efflux from endosomes and lysosomes to maintain a steady-state pH. Activated at low pH (under pH 4.6) by luminal side protons: selectively mediates lysosomal proton release from lysosomes, eliciting a proton leak that balances V-ATPase activity to maintain pH homeostasis. Regulation of lumenal pH stability is required for autophagosome-lysosome fusion. Also acts as a potassium channel at higher pH, regulating potassium conductance in endosomes and lysosomes. Constitutes the pore-forming subunit of the lysoK(GF) complex, a complex activated by extracellular growth factors. The lysoK(GF) complex is composed of TMEM175 and AKT (AKT1, AKT2 or AKT3), a major target of growth factor receptors: in the complex, TMEM175 channel is opened by conformational changes by AKT, leading to its activation. The lysoK(GF) complex is required to protect neurons against stress-induced damage. This Rattus norvegicus (Rat) protein is Endosomal/lysosomal proton channel TMEM175.